A 338-amino-acid chain; its full sequence is Mitoferrin-1 (338 aa).

The disordered stretch occupies residues 1–37; sequence MELRRGGVGNQAAGRRMDGDCRDGGCGSKDAGSEDYE. 3 Solcar repeats span residues 43-131, 141-225, and 232-326; these read ASVS…MKRT, NSHL…LQEQ, and YNPQ…FKYI. 6 helical membrane-spanning segments follow: residues 45 to 64, 106 to 125, 143 to 162, 200 to 219, 234 to 253, and 301 to 320; these read VSTH…SIMY, GLNV…FACY, HLAN…AVMN, SYTT…FITY, PQSH…AATT, and GIQA…WSVY.

It belongs to the mitochondrial carrier (TC 2.A.29) family. Interacts with ACB10; this interaction stabilizes SLC25A37 and enhances the function of SLC25A37 to import mitochondrial iron during erythroid differentiation. In terms of tissue distribution, highly expressed in hematopoietic organs, fetal liver, bone marrow and spleen.

It localises to the mitochondrion inner membrane. It carries out the reaction Fe(2+)(in) = Fe(2+)(out). Functionally, mitochondrial iron transporter that specifically mediates iron uptake in developing erythroid cells, thereby playing an essential role in heme biosynthesis. The chain is Mitoferrin-1 (Slc25a37) from Mus musculus (Mouse).